The chain runs to 597 residues: NADH-quinone oxidoreductase subunit C/D (597 aa).

The tract at residues 1-187 (MIDENKKKNT…ESFFLDEQKE (187 aa)) is NADH dehydrogenase I subunit C. Residues 211 to 597 (DFMFLNLGPN…IDFVMSDVDR (387 aa)) are NADH dehydrogenase I subunit D.

The protein in the N-terminal section; belongs to the complex I 30 kDa subunit family. This sequence in the C-terminal section; belongs to the complex I 49 kDa subunit family. NDH-1 is composed of 13 different subunits. Subunits NuoB, CD, E, F, and G constitute the peripheral sector of the complex.

The protein resides in the cell inner membrane. It catalyses the reaction a quinone + NADH + 5 H(+)(in) = a quinol + NAD(+) + 4 H(+)(out). NDH-1 shuttles electrons from NADH, via FMN and iron-sulfur (Fe-S) centers, to quinones in the respiratory chain. The immediate electron acceptor for the enzyme in this species is believed to be ubiquinone. Couples the redox reaction to proton translocation (for every two electrons transferred, four hydrogen ions are translocated across the cytoplasmic membrane), and thus conserves the redox energy in a proton gradient. This chain is NADH-quinone oxidoreductase subunit C/D, found in Buchnera aphidicola subsp. Schizaphis graminum (strain Sg).